The primary structure comprises 528 residues: Protein HPH2 (528 aa).

Residues 1-13 (MQNAQIKSSSKGS) are compositionally biased toward low complexity. Disordered stretches follow at residues 1-52 (MQNA…STVE), 170-193 (AQQH…PSRS), 230-257 (ILPN…STQT), and 270-334 (ESSP…QSVA). Residues 17 to 36 (GTDRNSKDGVEKRPLEDVKQ) show a composition bias toward basic and acidic residues. Composition is skewed to low complexity over residues 283–296 (PSVA…VANP) and 308–332 (SFSQ…FSQS). A helical membrane pass occupies residues 505–521 (ALDIVFLIIIIVICYTF).

Interacts with HPH1/FRT1. In terms of processing, phosphorylated by CDC28.

The protein localises to the endoplasmic reticulum membrane. In terms of biological role, required for growth under high NaCl, alkaline pH and cell wall stress. The protein is Protein HPH2 (FRT2) of Saccharomyces cerevisiae (strain ATCC 204508 / S288c) (Baker's yeast).